A 147-amino-acid polypeptide reads, in one-letter code: Ubiquitin-conjugating enzyme E2 4 (147 aa).

Positions 1–147 constitute a UBC core domain; sequence MALKRINREL…AREWTRKYAI (147 aa). The Glycyl thioester intermediate role is filled by Cys85.

This sequence belongs to the ubiquitin-conjugating enzyme family. As to quaternary structure, interacts with the E1 ubiquitin-activating enzyme ptr3 and E3 ubiquitin-protein ligase pub2.

It carries out the reaction S-ubiquitinyl-[E1 ubiquitin-activating enzyme]-L-cysteine + [E2 ubiquitin-conjugating enzyme]-L-cysteine = [E1 ubiquitin-activating enzyme]-L-cysteine + S-ubiquitinyl-[E2 ubiquitin-conjugating enzyme]-L-cysteine.. Its pathway is protein modification; protein ubiquitination. Its function is as follows. E2 ubiquitin-conjugating enzyme that catalyzes the covalent attachment of ubiquitin to other proteins. Mediates the selective degradation of short-lived and abnormal proteins. Mediates ubiquitination of pex5. This chain is Ubiquitin-conjugating enzyme E2 4 (ubc4), found in Schizosaccharomyces pombe (strain 972 / ATCC 24843) (Fission yeast).